The primary structure comprises 131 residues: Fluoride-specific ion channel FluC 2 (131 aa).

4 consecutive transmembrane segments (helical) span residues 4–24 (IIQG…ARFW), 46–66 (VSGA…HGVF), 71–91 (PWLF…SFAL), and 105–125 (AISN…LGFA). Na(+) contacts are provided by Gly81 and Thr84.

The protein belongs to the fluoride channel Fluc/FEX (TC 1.A.43) family.

It localises to the cell inner membrane. The catalysed reaction is fluoride(in) = fluoride(out). With respect to regulation, na(+) is not transported, but it plays an essential structural role and its presence is essential for fluoride channel function. Fluoride-specific ion channel. Important for reducing fluoride concentration in the cell, thus reducing its toxicity. This is Fluoride-specific ion channel FluC 2 from Rhodopseudomonas palustris (strain BisB18).